A 614-amino-acid chain; its full sequence is Phosphomethylpyrimidine synthase (614 aa).

Residues N226, M255, Y284, H320, 340 to 342 (SRG), 381 to 384 (DGLR), and E420 each bind substrate. Position 424 (H424) interacts with Zn(2+). Y447 is a binding site for substrate. H488 contributes to the Zn(2+) binding site. [4Fe-4S] cluster-binding residues include C568, C571, and C576.

The protein belongs to the ThiC family. As to quaternary structure, homodimer. Requires [4Fe-4S] cluster as cofactor.

The enzyme catalyses 5-amino-1-(5-phospho-beta-D-ribosyl)imidazole + S-adenosyl-L-methionine = 4-amino-2-methyl-5-(phosphooxymethyl)pyrimidine + CO + 5'-deoxyadenosine + formate + L-methionine + 3 H(+). The protein operates within cofactor biosynthesis; thiamine diphosphate biosynthesis. Functionally, catalyzes the synthesis of the hydroxymethylpyrimidine phosphate (HMP-P) moiety of thiamine from aminoimidazole ribotide (AIR) in a radical S-adenosyl-L-methionine (SAM)-dependent reaction. The sequence is that of Phosphomethylpyrimidine synthase from Acidovorax sp. (strain JS42).